The chain runs to 808 residues: Probable inorganic carbon transporter subunit DabA (808 aa).

Zn(2+) is bound by residues Cys-335, Asp-337, His-497, and Cys-512.

Belongs to the inorganic carbon transporter (TC 9.A.2) DabA family. Forms a complex with DabB. The cofactor is Zn(2+).

Its subcellular location is the cell inner membrane. Functionally, part of an energy-coupled inorganic carbon pump. This chain is Probable inorganic carbon transporter subunit DabA, found in Rhodopseudomonas palustris (strain ATCC BAA-98 / CGA009).